Reading from the N-terminus, the 494-residue chain is UPF0371 protein SP_0341 (494 aa).

This sequence belongs to the UPF0371 family.

This Streptococcus pneumoniae serotype 4 (strain ATCC BAA-334 / TIGR4) protein is UPF0371 protein SP_0341.